A 408-amino-acid chain; its full sequence is LL-diaminopimelate aminotransferase (408 aa).

Substrate-binding residues include Tyr15 and Gly42. Residues Tyr72, 108–109 (SK), Tyr132, Asn187, Tyr218, and 246–248 (SFS) each bind pyridoxal 5'-phosphate. Substrate is bound by residues Lys109, Tyr132, and Asn187. At Lys249 the chain carries N6-(pyridoxal phosphate)lysine. Residues Arg257 and Asn291 each coordinate pyridoxal 5'-phosphate. Substrate is bound by residues Asn291 and Arg387.

This sequence belongs to the class-I pyridoxal-phosphate-dependent aminotransferase family. LL-diaminopimelate aminotransferase subfamily. In terms of assembly, homodimer. Pyridoxal 5'-phosphate is required as a cofactor.

The catalysed reaction is (2S,6S)-2,6-diaminopimelate + 2-oxoglutarate = (S)-2,3,4,5-tetrahydrodipicolinate + L-glutamate + H2O + H(+). The protein operates within amino-acid biosynthesis; L-lysine biosynthesis via DAP pathway; LL-2,6-diaminopimelate from (S)-tetrahydrodipicolinate (aminotransferase route): step 1/1. Its function is as follows. Involved in the synthesis of meso-diaminopimelate (m-DAP or DL-DAP), required for both lysine and peptidoglycan biosynthesis. Catalyzes the direct conversion of tetrahydrodipicolinate to LL-diaminopimelate. This is LL-diaminopimelate aminotransferase from Prochlorococcus marinus (strain NATL2A).